The following is a 405-amino-acid chain: L-rhamnonate dehydratase (405 aa).

Residues histidine 33 and arginine 59 each contribute to the substrate site. Residues aspartate 226, glutamate 252, and glutamate 280 each contribute to the Mg(2+) site. Histidine 329 (proton acceptor) is an active-site residue. Residue glutamate 349 participates in substrate binding.

Belongs to the mandelate racemase/muconate lactonizing enzyme family. RhamD subfamily. Homooctamer; tetramer of dimers. Mg(2+) serves as cofactor.

It carries out the reaction L-rhamnonate = 2-dehydro-3-deoxy-L-rhamnonate + H2O. Functionally, catalyzes the dehydration of L-rhamnonate to 2-keto-3-deoxy-L-rhamnonate (KDR). The protein is L-rhamnonate dehydratase of Escherichia coli O9:H4 (strain HS).